A 479-amino-acid polypeptide reads, in one-letter code: ATP synthase subunit beta (479 aa).

An ATP-binding site is contributed by 162 to 169; the sequence is GGAGVGKT.

Belongs to the ATPase alpha/beta chains family. As to quaternary structure, F-type ATPases have 2 components, CF(1) - the catalytic core - and CF(0) - the membrane proton channel. CF(1) has five subunits: alpha(3), beta(3), gamma(1), delta(1), epsilon(1). CF(0) has three main subunits: a(1), b(2) and c(9-12). The alpha and beta chains form an alternating ring which encloses part of the gamma chain. CF(1) is attached to CF(0) by a central stalk formed by the gamma and epsilon chains, while a peripheral stalk is formed by the delta and b chains.

The protein resides in the cell membrane. It carries out the reaction ATP + H2O + 4 H(+)(in) = ADP + phosphate + 5 H(+)(out). Functionally, produces ATP from ADP in the presence of a proton gradient across the membrane. The catalytic sites are hosted primarily by the beta subunits. This Mesoplasma florum (strain ATCC 33453 / NBRC 100688 / NCTC 11704 / L1) (Acholeplasma florum) protein is ATP synthase subunit beta.